A 333-amino-acid polypeptide reads, in one-letter code: Trimethylamine N-oxide-binding protein (333 aa).

A signal peptide spans 1–42 (MRLFREIAANDPGPTGRMKNMKTFTTALATGVLALCPLAALA). Trimethylamine N-oxide contacts are provided by Trp-55, Trp-102, Glu-131, Trp-177, and Trp-222. Ca(2+) contacts are provided by Pro-249, Val-251, Asn-254, Ala-257, and Asp-260.

In terms of assembly, the complex is probably composed of two ATP-binding proteins (TmoW), two transmembrane proteins (TmoV) and a solute-binding protein (TmoX). Monomer in solution, but forms homodimers in crystals.

Its subcellular location is the periplasm. Its activity is regulated as follows. Binds a Ca(2+) ion, which has little effect on either the binding affinity or the secondary structure, but plays an important role in maintaining the stability of TmoX. It may modulate the protein stability in response to biological needs and environmental changes. Thermostability is dramatically decreased when Ca(2+) is removed by EDTA. In terms of biological role, part of the ABC transporter complex TmoXWV involved in trimethylamine N-oxide (TMAO) import. Is specific for TMAO and essential for TMAO metabolism. Binds TMAO with high affinity. In vitro, also presents a high binding affinity for choline, however this transporter seems specific for TMAO and the choline-binding affinity presented by recombinant TmoX may not make physiological sense. This chain is Trimethylamine N-oxide-binding protein, found in Ruegeria pomeroyi (strain ATCC 700808 / DSM 15171 / DSS-3) (Silicibacter pomeroyi).